Here is a 396-residue protein sequence, read N- to C-terminus: S-adenosylmethionine synthase (396 aa).

Position 15 (H15) interacts with ATP. D17 lines the Mg(2+) pocket. A K(+)-binding site is contributed by E43. L-methionine contacts are provided by E56 and Q99. The flexible loop stretch occupies residues Q99–K109. ATP-binding positions include D175–K177, R241–F242, D250, R256–K257, A273, and K277. D250 contributes to the L-methionine binding site. Position 281 (K281) interacts with L-methionine.

Belongs to the AdoMet synthase family. As to quaternary structure, homotetramer; dimer of dimers. It depends on Mg(2+) as a cofactor. K(+) is required as a cofactor.

The protein resides in the cytoplasm. It carries out the reaction L-methionine + ATP + H2O = S-adenosyl-L-methionine + phosphate + diphosphate. Its pathway is amino-acid biosynthesis; S-adenosyl-L-methionine biosynthesis; S-adenosyl-L-methionine from L-methionine: step 1/1. Catalyzes the formation of S-adenosylmethionine (AdoMet) from methionine and ATP. The overall synthetic reaction is composed of two sequential steps, AdoMet formation and the subsequent tripolyphosphate hydrolysis which occurs prior to release of AdoMet from the enzyme. The protein is S-adenosylmethionine synthase of Ruminiclostridium cellulolyticum (strain ATCC 35319 / DSM 5812 / JCM 6584 / H10) (Clostridium cellulolyticum).